A 619-amino-acid polypeptide reads, in one-letter code: Dihydroxy-acid dehydratase (619 aa).

Position 81 (Asp81) interacts with Mg(2+). Cys122 provides a ligand contact to [2Fe-2S] cluster. The Mg(2+) site is built by Asp123 and Lys124. N6-carboxylysine is present on Lys124. Residue Cys201 coordinates [2Fe-2S] cluster. Position 496 (Glu496) interacts with Mg(2+). The active-site Proton acceptor is Ser522.

It belongs to the IlvD/Edd family. As to quaternary structure, homodimer. The cofactor is [2Fe-2S] cluster. Requires Mg(2+) as cofactor.

It carries out the reaction (2R)-2,3-dihydroxy-3-methylbutanoate = 3-methyl-2-oxobutanoate + H2O. It catalyses the reaction (2R,3R)-2,3-dihydroxy-3-methylpentanoate = (S)-3-methyl-2-oxopentanoate + H2O. It functions in the pathway amino-acid biosynthesis; L-isoleucine biosynthesis; L-isoleucine from 2-oxobutanoate: step 3/4. The protein operates within amino-acid biosynthesis; L-valine biosynthesis; L-valine from pyruvate: step 3/4. In terms of biological role, functions in the biosynthesis of branched-chain amino acids. Catalyzes the dehydration of (2R,3R)-2,3-dihydroxy-3-methylpentanoate (2,3-dihydroxy-3-methylvalerate) into 2-oxo-3-methylpentanoate (2-oxo-3-methylvalerate) and of (2R)-2,3-dihydroxy-3-methylbutanoate (2,3-dihydroxyisovalerate) into 2-oxo-3-methylbutanoate (2-oxoisovalerate), the penultimate precursor to L-isoleucine and L-valine, respectively. In Burkholderia vietnamiensis (strain G4 / LMG 22486) (Burkholderia cepacia (strain R1808)), this protein is Dihydroxy-acid dehydratase.